The sequence spans 143 residues: MNIYFCGSIRGGRQDVVIYQTIVKKLQQYGNVLTEHVSYDSLSDKGEDKDGDKAIHDRDVQWLTMSDVIVAEVTQPSLGVGYELGRAVAMNKRILCLFRPFSGKVLSAMIRGASAKPLFQVQDYKEDEVENILEEYFETLTKN.

5-hydroxymethyl-dUMP is bound by residues Gly7, Ile9, Arg10, Gly11, Ser77, Gly79, Glu83, and Ser107.

It belongs to the 2'-deoxynucleoside 5'-phosphate N-hydrolase 1 family. As to quaternary structure, monomer and homodimer.

It localises to the cytoplasm. Its subcellular location is the nucleus. The enzyme catalyses 5-hydroxymethyl-dUMP + H2O = 5-hydroxymethyluracil + 2-deoxy-D-ribose 5-phosphate. Its function is as follows. Part of a nucleotide salvage pathway that eliminates epigenetically modified 5-hydroxymethyl-dCMP (hmdCMP) in a two-step process entailing deamination to cytotoxic 5-hydroxymethyl-dUMP (hmdUMP), followed by its hydrolysis into 5-hydroxymethyluracil (hmU) and 2-deoxy-D-ribose 5-phosphate (deoxyribosephosphate). In Danio rerio (Zebrafish), this protein is 5-hydroxymethyl-dUMP N-hydrolase (dnph1).